We begin with the raw amino-acid sequence, 72 residues long: MEKKSLACLSFLLLVLFVAQEIVVSEANTCENLAGSYKGVCFGGCDRHCRTQEGAISGRCRDDFRCWCTKNC.

Positions 1–27 (MEKKSLACLSFLLLVLFVAQEIVVSEA) are cleaved as a signal peptide. Disulfide bonds link Cys-30-Cys-72, Cys-41-Cys-60, Cys-45-Cys-66, and Cys-49-Cys-68.

This sequence belongs to the DEFL family.

Its subcellular location is the secreted. The protein is Defensin-like protein 230 (PI230) of Pisum sativum (Garden pea).